The primary structure comprises 1439 residues: Microtubule organization protein AKNA (1439 aa).

Composition is skewed to basic and acidic residues over residues 1–10 (MASSETEIRW) and 25–35 (AWAEDKRDVDR). Residues 1-394 (MASSETEIRW…NRKPQAPARP (394 aa)) form a disordered region. Serine 52 carries the post-translational modification Phosphoserine. Basic and acidic residues predominate over residues 71 to 83 (WDPHPQPDGHQDS). Positions 89-99 (SGEEAEAEDVD) are enriched in acidic residues. Residues 263 to 275 (QDSSAPPAQSPQH) are compositionally biased toward polar residues. Positions 276 to 285 (ATDRWRRETT) are enriched in basic and acidic residues. Phosphoserine occurs at positions 316, 499, and 534. 2 disordered regions span residues 507–562 (SAEW…SAEQ) and 659–682 (IDQT…PALP). The segment covering 533–544 (LSPSSLTSMPTL) has biased composition (low complexity). 2 positions are modified to phosphoserine: serine 767 and serine 770. The tract at residues 771–804 (LPEAMRMEEEEEGEEEEEEEGGGDSLEVDGVAAT) is PEST. 2 disordered regions span residues 775–942 (MRME…QTPE) and 977–1005 (IPRR…LRQR). Over residues 778-792 (EEEEEGEEEEEEEGG) the composition is skewed to acidic residues. Residue serine 848 is modified to Phosphoserine. Pro residues predominate over residues 865–875 (PPGPGVPPHPP). Polar residues-rich tracts occupy residues 879–891 (SAAS…TSLE), 929–940 (SETSRVSPLTQT), and 983–999 (EPST…SSPS). At serine 886 the chain carries Phosphoserine. The PEST stretch occupies residues 911–932 (HLEETWMASPETDSGFVGSETS). Residues serine 997 and serine 1010 each carry the phosphoserine modification. Residues 1095 to 1165 (LHQPLQGSPT…RARSSSVPRE (71 aa)) are disordered. A DNA-binding region (a.T hook) is located at residues 1115–1123 (RTRGRPADS). Residues 1135 to 1147 (STERLPGEPRGEE) show a composition bias toward basic and acidic residues. Phosphoserine occurs at positions 1172 and 1173. The disordered stretch occupies residues 1180-1211 (LPLFSEKSKTTKDSPQAARDGKRGVGSAGWPD). Residue serine 1228 is modified to Phosphoserine. The disordered stretch occupies residues 1252–1329 (AGGAVTGDPL…RPPPGLWYLA (78 aa)). The segment covering 1303–1317 (SSTPSPKQRSKQAGS) has biased composition (polar residues). Phosphoserine occurs at positions 1377, 1387, and 1424.

It belongs to the AKNA family. In terms of assembly, interacts with DCTN1. Interacts with MAPRE1/EB1. Interacts with ODF2. Interacts with CAMSAP3. Phosphorylated; phosphorylation regulates dissociation from and reassembly at the centrosome. In terms of tissue distribution, predominantly expressed by lymphoid tissues. Highly expressed in the spleen, lymph nodes and peripheral blood leukocytes, expressed at lower level in the thymus. Mainly expressed by germinal center B-lymphocytes, a stage in which receptor and ligand interactions are crucial for B-lymphocyte maturation. Expressed by B- and T-lymphocytes, Natural killer cells and CD1a(+)CD14(-) but not CD1a(-)CD14(+) dendritic cells. Weakly or not expressed in fetal liver and in adult bone marrow.

It is found in the cytoplasm. The protein resides in the cytoskeleton. Its subcellular location is the microtubule organizing center. The protein localises to the centrosome. It localises to the centriole. It is found in the nucleus. In terms of biological role, centrosomal protein that plays a key role in cell delamination by regulating microtubule organization. Required for the delamination and retention of neural stem cells from the subventricular zone during neurogenesis. Also regulates the epithelial-to-mesenchymal transition in other epithelial cells. Acts by increasing centrosomal microtubule nucleation and recruiting nucleation factors and minus-end stabilizers, thereby destabilizing microtubules at the adherens junctions and mediating constriction of the apical endfoot. In addition, may also act as a transcription factor that specifically activates the expression of the CD40 receptor and its ligand CD40L/CD154, two cell surface molecules on lymphocytes that are critical for antigen-dependent-B-cell development. Binds to A/T-rich promoters. It is unclear how it can both act as a microtubule organizer and as a transcription factor; additional evidences are required to reconcile these two apparently contradictory functions. This Homo sapiens (Human) protein is Microtubule organization protein AKNA.